Consider the following 209-residue polypeptide: Probable GTP-binding protein EngB (209 aa).

The 177-residue stretch at Thr22 to Ala198 folds into the EngB-type G domain. Residues Ser37 and Thr59 each contribute to the Mg(2+) site.

This sequence belongs to the TRAFAC class TrmE-Era-EngA-EngB-Septin-like GTPase superfamily. EngB GTPase family. It depends on Mg(2+) as a cofactor.

Functionally, necessary for normal cell division and for the maintenance of normal septation. The sequence is that of Probable GTP-binding protein EngB from Neisseria gonorrhoeae (strain ATCC 700825 / FA 1090).